Here is a 202-residue protein sequence, read N- to C-terminus: Imidazoleglycerol-phosphate dehydratase (202 aa).

The protein belongs to the imidazoleglycerol-phosphate dehydratase family.

It localises to the cytoplasm. The catalysed reaction is D-erythro-1-(imidazol-4-yl)glycerol 3-phosphate = 3-(imidazol-4-yl)-2-oxopropyl phosphate + H2O. Its pathway is amino-acid biosynthesis; L-histidine biosynthesis; L-histidine from 5-phospho-alpha-D-ribose 1-diphosphate: step 6/9. This Parasynechococcus marenigrum (strain WH8102) protein is Imidazoleglycerol-phosphate dehydratase.